The following is a 260-amino-acid chain: Ribonuclease 3 (260 aa).

The RNase III domain maps to V16–G145. E58 is a binding site for Mg(2+). D62 is a catalytic residue. 2 residues coordinate Mg(2+): D131 and E134. E134 is an active-site residue. A DRBM domain is found at D172–E241. The interval A219–A260 is disordered.

This sequence belongs to the ribonuclease III family. In terms of assembly, homodimer. Mg(2+) is required as a cofactor.

Its subcellular location is the cytoplasm. It catalyses the reaction Endonucleolytic cleavage to 5'-phosphomonoester.. Digests double-stranded RNA. Involved in the processing of primary rRNA transcript to yield the immediate precursors to the large and small rRNAs (23S and 16S). Processes some mRNAs, and tRNAs when they are encoded in the rRNA operon. Processes pre-crRNA and tracrRNA of type II CRISPR loci if present in the organism. This is Ribonuclease 3 from Myxococcus xanthus (strain DK1622).